We begin with the raw amino-acid sequence, 65 residues long: uncharacterized protein (65 aa).

Residues 1-65 (MIALSVCWQI…ETGIGYRFML (65 aa)) constitute a DNA-binding region (ompR/PhoB-type).

This is an uncharacterized protein from Escherichia coli (strain K12).